A 695-amino-acid chain; its full sequence is Elongation factor G 1 (695 aa).

The region spanning 6 to 284 (KKVRNIGISA…VTRYLPCPAD (279 aa)) is the tr-type G domain. GTP is bound by residues 15–22 (AHIDSGKT), 82–86 (DTPGH), and 136–139 (NKCD).

Belongs to the TRAFAC class translation factor GTPase superfamily. Classic translation factor GTPase family. EF-G/EF-2 subfamily.

It localises to the cytoplasm. Functionally, catalyzes the GTP-dependent ribosomal translocation step during translation elongation. During this step, the ribosome changes from the pre-translocational (PRE) to the post-translocational (POST) state as the newly formed A-site-bound peptidyl-tRNA and P-site-bound deacylated tRNA move to the P and E sites, respectively. Catalyzes the coordinated movement of the two tRNA molecules, the mRNA and conformational changes in the ribosome. The polypeptide is Elongation factor G 1 (Syntrophus aciditrophicus (strain SB)).